The chain runs to 392 residues: uncharacterized protein (392 aa).

It belongs to the hcp1 family.

This is an uncharacterized protein from Escherichia coli (strain K12).